We begin with the raw amino-acid sequence, 428 residues long: Beta-1,3-galactosyl-O-glycosyl-glycoprotein beta-1,6-N-acetylglucosaminyltransferase 4 (428 aa).

Topologically, residues 1 to 12 (MRRCAVLHRLRC) are cytoplasmic. The helical; Signal-anchor for type II membrane protein transmembrane segment at 13–30 (KFYVFVVSLFVVVKLVYL) threads the bilayer. Topologically, residues 31 to 428 (KISMDNSIYI…QLQQCLRRVS (398 aa)) are lumenal. N-linked (GlcNAc...) asparagine glycosylation is present at asparagine 59. Intrachain disulfides connect cysteine 60–cysteine 214, cysteine 148–cysteine 369, cysteine 169–cysteine 196, and cysteine 378–cysteine 410.

It belongs to the glycosyltransferase 14 family.

Its subcellular location is the golgi apparatus membrane. The catalysed reaction is a 3-O-[beta-D-galactosyl-(1-&gt;3)-N-acetyl-alpha-D-galactosaminyl]-L-seryl-[protein] + UDP-N-acetyl-alpha-D-glucosamine = 3-O-{beta-D-galactosyl-(1-&gt;3)-[N-acetyl-beta-D-glucosaminyl-(1-&gt;6)]-N-acetyl-alpha-D-galactosaminyl}-L-seryl-[protein] + UDP + H(+). It catalyses the reaction a 3-O-[beta-D-galactosyl-(1-&gt;3)-N-acetyl-alpha-D-galactosaminyl]-L-threonyl-[protein] + UDP-N-acetyl-alpha-D-glucosamine = a 3-O-{beta-D-galactosyl-(1-&gt;3)-[N-acetyl-beta-D-glucosaminyl-(1-&gt;6)]-N-acetyl-alpha-D-galactosaminyl}-L-threonyl-[protein] + UDP + H(+). It functions in the pathway protein modification; protein glycosylation. Functionally, glycosyltransferase that mediates core 2 O-glycan branching, an important step in mucin-type biosynthesis. The chain is Beta-1,3-galactosyl-O-glycosyl-glycoprotein beta-1,6-N-acetylglucosaminyltransferase 4 (gcnt4) from Danio rerio (Zebrafish).